The chain runs to 95 residues: MALERCDVEKIAHLARLGLNEGELPRITDALNSILGLVDQMQAVDTTGIEPLAHPLEASQRLRPDQVTESNQRDAYQAIAPKTESGLYLVPKVIE.

The protein belongs to the GatC family. Heterotrimer of A, B and C subunits.

The catalysed reaction is L-glutamyl-tRNA(Gln) + L-glutamine + ATP + H2O = L-glutaminyl-tRNA(Gln) + L-glutamate + ADP + phosphate + H(+). The enzyme catalyses L-aspartyl-tRNA(Asn) + L-glutamine + ATP + H2O = L-asparaginyl-tRNA(Asn) + L-glutamate + ADP + phosphate + 2 H(+). Its function is as follows. Allows the formation of correctly charged Asn-tRNA(Asn) or Gln-tRNA(Gln) through the transamidation of misacylated Asp-tRNA(Asn) or Glu-tRNA(Gln) in organisms which lack either or both of asparaginyl-tRNA or glutaminyl-tRNA synthetases. The reaction takes place in the presence of glutamine and ATP through an activated phospho-Asp-tRNA(Asn) or phospho-Glu-tRNA(Gln). This Pseudomonas putida (strain W619) protein is Aspartyl/glutamyl-tRNA(Asn/Gln) amidotransferase subunit C.